Consider the following 382-residue polypeptide: Beta-1,4-galactosyltransferase 6 (382 aa).

Residues 1–15 (MSALKRMMRVSNRSL) are Cytoplasmic-facing. Residues 16–35 (IAFIFFFSLSTSCLYFIYVA) traverse the membrane as a helical; Signal-anchor for type II membrane protein segment. Topologically, residues 36–382 (PGIANTYLFM…MPELAPIEDY (347 aa)) are lumenal. Residues asparagine 71, asparagine 75, asparagine 83, asparagine 84, asparagine 99, and asparagine 122 are each glycosylated (N-linked (GlcNAc...) asparagine). Residues cysteine 108 and cysteine 152 are joined by a disulfide bond. Residues 163–167 (PFRNR), 202–204 (FNR), 229–230 (VD), tyrosine 258, and tryptophan 290 each bind UDP-alpha-D-galactose. Cysteine 223 and cysteine 242 form a disulfide bridge. Aspartate 230 contributes to the Mn(2+) binding site. 292 to 295 (GEDD) is an N-acetyl-D-glucosamine binding site. The N-linked (GlcNAc...) asparagine glycan is linked to asparagine 307. A Mn(2+)-binding site is contributed by histidine 323. UDP-alpha-D-galactose is bound at residue 323–324 (HH). Residue arginine 334 participates in N-acetyl-D-glucosamine binding. Asparagine 367 is a glycosylation site (N-linked (GlcNAc...) asparagine).

It belongs to the glycosyltransferase 7 family. Mn(2+) is required as a cofactor. Requires Mg(2+) as cofactor. It depends on Ca(2+) as a cofactor. In terms of tissue distribution, brain and kidney.

It localises to the golgi apparatus. The protein localises to the golgi stack membrane. The enzyme catalyses a beta-D-glucosyl-(1&lt;-&gt;1')-N-acylsphing-4-enine + UDP-alpha-D-galactose = a beta-D-Gal-(1-&gt;4)-beta-D-Glc-(1&lt;-&gt;1)-Cer(d18:1(4E)) + UDP + H(+). It participates in protein modification; protein glycosylation. The protein operates within sphingolipid metabolism. Its activity is regulated as follows. Inhibited by EDTA. In terms of biological role, catalyzes the synthesis of lactosylceramide (LacCer) via the transfer of galactose from UDP-galactose to glucosylceramide (GlcCer). LacCer is the starting point in the biosynthesis of all gangliosides (membrane-bound glycosphingolipids) which play pivotal roles in the CNS including neuronal maturation and axonal and myelin formation. This Mus musculus (Mouse) protein is Beta-1,4-galactosyltransferase 6.